Here is a 950-residue protein sequence, read N- to C-terminus: Glycine dehydrogenase (decarboxylating) (950 aa).

At K698 the chain carries N6-(pyridoxal phosphate)lysine.

Belongs to the GcvP family. As to quaternary structure, the glycine cleavage system is composed of four proteins: P, T, L and H. Requires pyridoxal 5'-phosphate as cofactor.

The catalysed reaction is N(6)-[(R)-lipoyl]-L-lysyl-[glycine-cleavage complex H protein] + glycine + H(+) = N(6)-[(R)-S(8)-aminomethyldihydrolipoyl]-L-lysyl-[glycine-cleavage complex H protein] + CO2. Its function is as follows. The glycine cleavage system catalyzes the degradation of glycine. The P protein binds the alpha-amino group of glycine through its pyridoxal phosphate cofactor; CO(2) is released and the remaining methylamine moiety is then transferred to the lipoamide cofactor of the H protein. This Neisseria meningitidis serogroup C / serotype 2a (strain ATCC 700532 / DSM 15464 / FAM18) protein is Glycine dehydrogenase (decarboxylating).